Here is a 393-residue protein sequence, read N- to C-terminus: NAD(P)H-quinone oxidoreductase subunit H, chloroplastic (393 aa).

It belongs to the complex I 49 kDa subunit family. In terms of assembly, NDH is composed of at least 16 different subunits, 5 of which are encoded in the nucleus.

The protein resides in the plastid. It is found in the chloroplast thylakoid membrane. The enzyme catalyses a plastoquinone + NADH + (n+1) H(+)(in) = a plastoquinol + NAD(+) + n H(+)(out). The catalysed reaction is a plastoquinone + NADPH + (n+1) H(+)(in) = a plastoquinol + NADP(+) + n H(+)(out). Functionally, NDH shuttles electrons from NAD(P)H:plastoquinone, via FMN and iron-sulfur (Fe-S) centers, to quinones in the photosynthetic chain and possibly in a chloroplast respiratory chain. The immediate electron acceptor for the enzyme in this species is believed to be plastoquinone. Couples the redox reaction to proton translocation, and thus conserves the redox energy in a proton gradient. This Morus indica (Mulberry) protein is NAD(P)H-quinone oxidoreductase subunit H, chloroplastic.